The primary structure comprises 248 residues: Probable transcriptional regulatory protein RPB_4273 (248 aa).

Residues 1 to 22 form a disordered region; sequence MAGHSQFKNIMHRKGKQDAQRS.

Belongs to the TACO1 family.

The protein localises to the cytoplasm. The sequence is that of Probable transcriptional regulatory protein RPB_4273 from Rhodopseudomonas palustris (strain HaA2).